The chain runs to 231 residues: tRNA (guanine-N(1)-)-methyltransferase (231 aa).

S-adenosyl-L-methionine-binding positions include Gly-112 and 132–137; that span reads IGDYIL.

The protein belongs to the RNA methyltransferase TrmD family. As to quaternary structure, homodimer.

Its subcellular location is the cytoplasm. It carries out the reaction guanosine(37) in tRNA + S-adenosyl-L-methionine = N(1)-methylguanosine(37) in tRNA + S-adenosyl-L-homocysteine + H(+). In terms of biological role, specifically methylates guanosine-37 in various tRNAs. This is tRNA (guanine-N(1)-)-methyltransferase from Sulfurimonas denitrificans (strain ATCC 33889 / DSM 1251) (Thiomicrospira denitrificans (strain ATCC 33889 / DSM 1251)).